Consider the following 1847-residue polypeptide: Cilia- and flagella-associated protein 65 (1847 aa).

Residues 112-132 form a helical membrane-spanning segment; that stretch reads FFTIIPQPIFLSPGITLTLPI. The 110-residue stretch at 805–914 folds into the MSP domain; the sequence is DLKLDTHKSI…VHYRIRLVGM (110 aa). Residues 1457–1483 adopt a coiled-coil conformation; sequence QRELMRQYHKELQEWNEEKARQEVEFT. The segment at 1668-1721 is disordered; that stretch reads YEGRKSKEQEEDLFGKMPGGQEDDEEEEEDEEEAEEEEEEIEEEMSKDEEDIDK. The segment covering 1688–1720 has biased composition (acidic residues); the sequence is QEDDEEEEEDEEEAEEEEEEIEEEMSKDEEDID.

This sequence belongs to the CFAP65 family. Interacts with CFAP47. As to expression, predominantly expressed in testis. Highly expressed in round and elongating spermatids. Expressed also in certain ciliated organs, such as the brain, lung and kidney.

Its subcellular location is the cell projection. It is found in the cilium. The protein resides in the flagellum membrane. The protein localises to the cytoplasmic vesicle. It localises to the secretory vesicle. Its subcellular location is the acrosome membrane. It is found in the cytoplasm. Functionally, plays a role in flagellar formation and sperm motility. This Mus musculus (Mouse) protein is Cilia- and flagella-associated protein 65.